A 740-amino-acid chain; its full sequence is Isocitrate dehydrogenase [NADP] 2 (740 aa).

The NADP(+) site is built by Asn-83 and Ser-85. Ser-130, Asn-133, Arg-137, Arg-143, and Lys-253 together coordinate D-threo-isocitrate. Position 133 (Asn-133) interacts with NADP(+). Position 348 (Asp-348) interacts with Mg(2+). Positions 418 and 546 each coordinate D-threo-isocitrate. Mg(2+) contacts are provided by Asp-547 and Asp-551. NADP(+) contacts are provided by Ser-584, His-588, Arg-599, Asp-601, and Arg-648.

The protein belongs to the monomeric-type IDH family. Monomer. The cofactor is Mg(2+). Requires Mn(2+) as cofactor.

The enzyme catalyses D-threo-isocitrate + NADP(+) = 2-oxoglutarate + CO2 + NADPH. IDH activity is not significantly affected by monovalent cations. The combined addition of Mn(2+) and another divalent cation results in the decrease of the activity. Catalyzes the oxidative decarboxylation of isocitrate to 2-oxoglutarate and carbon dioxide with the concomitant reduction of NADP(+). Cannot use NAD(+). In Psychrobacter sp. (strain 13A), this protein is Isocitrate dehydrogenase [NADP] 2.